A 212-amino-acid polypeptide reads, in one-letter code: ER lumen protein-retaining receptor 2 (212 aa).

The Lumenal segment spans residues 1 to 4 (MNIF). The chain crosses the membrane as a helical span at residues 5–24 (RLTGDLSHLAAIIILLLKIW). Residues 25–32 (KSRSCAGI) are Cytoplasmic-facing. The helical transmembrane segment at 33-52 (SGKSQILFALVFTTRYLDLL) threads the bilayer. The interval 47–48 (RY) is interaction with the K-D-E-L motif on target proteins. Topologically, residues 53-58 (TSFISL) are lumenal. Residues 59–79 (YNTCMKVIYIGCAYATVYLIY) form a helical membrane-spanning segment. At 80–92 (AKFRATYDGNHDT) the chain is on the cytoplasmic side. A helical membrane pass occupies residues 93 to 110 (FRAEFLVVPVGGLAFLVN). At 111-116 (HDFSPL) the chain is on the lumenal side. The chain crosses the membrane as a helical span at residues 117–135 (EILWTFSIYLESVAILPQL). At 136-149 (FMISKTGEAETITT) the chain is on the cytoplasmic side. Residues 150–168 (HYLFCLGVYRALYLFNWIW) form a helical membrane-spanning segment. The segment at 159–169 (RALYLFNWIWR) is interaction with the K-D-E-L motif on target proteins. Residues 169 to 178 (RFYFEGFFDM) are Lumenal-facing. The helical transmembrane segment at 179 to 199 (IAIVAGVVQTILYCDFFYLYV) threads the bilayer. The Cytoplasmic segment spans residues 200 to 212 (TKVLKGKKLSLPA). Residues 204-207 (KGKK) form an important for recycling of cargo proteins with the sequence motif K-D-E-L from the Golgi to the endoplasmic reticulum region.

The protein belongs to the ERD2 family.

The protein localises to the endoplasmic reticulum membrane. Its subcellular location is the golgi apparatus membrane. It localises to the cytoplasmic vesicle. It is found in the COPI-coated vesicle membrane. Receptor for the C-terminal sequence motif K-D-E-L that is present on endoplasmic reticulum resident proteins and that mediates their recycling from the Golgi back to the endoplasmic reticulum. Binding is pH dependent, and is optimal at pH 5-5.4. This is ER lumen protein-retaining receptor 2 (kdelr2) from Danio rerio (Zebrafish).